Consider the following 262-residue polypeptide: Inner membrane protein YcfZ (262 aa).

The Cytoplasmic segment spans residues 1–4; sequence MKKF. Residues 5–27 form a helical membrane-spanning segment; sequence IILLSLLILLPLTAASKPLIPIM. Residues 28-182 lie on the Periplasmic side of the membrane; sequence KTLFTDVTGT…HENAPPGSTN (155 aa). A helical membrane pass occupies residues 183–202; that stretch reads TLGFIAWAATFILFSRIFYY. The Cytoplasmic portion of the chain corresponds to 203-206; the sequence is TTRF. Residues 207-229 traverse the membrane as a helical segment; that stretch reads IYALKFAVAMTIANMGYQALCLY. The Periplasmic portion of the chain corresponds to 230–238; the sequence is IDNSFAITR. Residues 239–258 traverse the membrane as a helical segment; the sequence is ISPLWAGLIGVCTFIAALLL. The Cytoplasmic segment spans residues 259–262; sequence TSKR.

It localises to the cell inner membrane. This Escherichia coli (strain K12) protein is Inner membrane protein YcfZ (ycfZ).